Consider the following 354-residue polypeptide: Tryptophan--tRNA ligase (354 aa).

ATP contacts are provided by residues 13-15 (QPT) and 21-22 (GN). Residues 14–22 (PTGNLHLGN) carry the 'HIGH' region motif. Residue Asp137 participates in L-tryptophan binding. Residues 149–151 (GDD), Val208, and 217–221 (KMSKS) contribute to the ATP site. The 'KMSKS' region motif lies at 217–221 (KMSKS).

This sequence belongs to the class-I aminoacyl-tRNA synthetase family. In terms of assembly, homodimer.

The protein resides in the cytoplasm. It catalyses the reaction tRNA(Trp) + L-tryptophan + ATP = L-tryptophyl-tRNA(Trp) + AMP + diphosphate + H(+). Catalyzes the attachment of tryptophan to tRNA(Trp). This chain is Tryptophan--tRNA ligase, found in Agrobacterium fabrum (strain C58 / ATCC 33970) (Agrobacterium tumefaciens (strain C58)).